Reading from the N-terminus, the 320-residue chain is Acetyl-coenzyme A carboxylase carboxyl transferase subunit alpha (320 aa).

Residues 42-295 (IGDKAAQALK…GDAIAEAFND (254 aa)) enclose the CoA carboxyltransferase C-terminal domain.

The protein belongs to the AccA family. As to quaternary structure, acetyl-CoA carboxylase is a heterohexamer composed of biotin carboxyl carrier protein (AccB), biotin carboxylase (AccC) and two subunits each of ACCase subunit alpha (AccA) and ACCase subunit beta (AccD).

The protein resides in the cytoplasm. The catalysed reaction is N(6)-carboxybiotinyl-L-lysyl-[protein] + acetyl-CoA = N(6)-biotinyl-L-lysyl-[protein] + malonyl-CoA. Its pathway is lipid metabolism; malonyl-CoA biosynthesis; malonyl-CoA from acetyl-CoA: step 1/1. Component of the acetyl coenzyme A carboxylase (ACC) complex. First, biotin carboxylase catalyzes the carboxylation of biotin on its carrier protein (BCCP) and then the CO(2) group is transferred by the carboxyltransferase to acetyl-CoA to form malonyl-CoA. In Nitrobacter hamburgensis (strain DSM 10229 / NCIMB 13809 / X14), this protein is Acetyl-coenzyme A carboxylase carboxyl transferase subunit alpha.